Consider the following 1397-residue polypeptide: ABC transporter G family member 41 (1397 aa).

The ABC transporter 1 domain maps to 138–411 (SLSKFVCSKK…FEGCGFKCPE (274 aa)). 171–178 (GPPGCGKT) is a binding site for ATP. Residues 489–701 (EMLKACSRRE…AEIGLTANEF (213 aa)) enclose the ABC transmembrane type-2 1 domain. A run of 6 helical transmembrane segments spans residues 507 to 527 (FIYLFKSGLLVFNALVTMTVF), 549 to 570 (ALFRLLADGLPELTLTISRLGV), 594 to 614 (IPLSVLDSFIWTVLTYYVIGY), 625 to 645 (FIILLTFHLSCISMFRAIASI), 651 to 671 (ACSITGAISVLLLALFGGFVI), and 735 to 755 (TAFGALVGFVLFFNALYTLAL). One can recognise an ABC transporter 2 domain in the interval 805-1050 (VTFQNVQYYI…VIKYFESIPG (246 aa)). ATP is bound at residue 842 to 849 (GVSGAGKT). One can recognise an ABC transmembrane type-2 2 domain in the interval 1122–1336 (GQLKACLWKQ…VLEGLLSSQY (215 aa)). Helical transmembrane passes span 1141–1161 (HNLTRIVFILLNSLLCSLLFW), 1173–1193 (LFSIFGSMYTIVIFSGINNCA), 1229–1249 (VPYSLLQSLLCTIIVYPMIGY), 1260–1280 (LYSIFCSLLIFNYCGMLMVAL), 1286–1306 (MALTLRSTFFSMVNLFAGFVM), 1314–1334 (WWIWMYYLSPTSWVLEGLLSS), and 1369–1389 (VVAFVLIAFPIIVASLFAFFM).

It belongs to the ABC transporter superfamily. ABCG family. PDR (TC 3.A.1.205) subfamily. As to expression, confined to roots.

The protein resides in the membrane. Its function is as follows. May be a general defense protein. This Arabidopsis thaliana (Mouse-ear cress) protein is ABC transporter G family member 41 (ABCG41).